Consider the following 512-residue polypeptide: L-aspartate oxidase (512 aa).

Residues S17–A20 and S46–G53 contribute to the FAD site. Residue R278 is the Proton donor/acceptor of the active site. Residues E361 and S377–L378 contribute to the FAD site.

It belongs to the FAD-dependent oxidoreductase 2 family. NadB subfamily. The cofactor is FAD.

It localises to the cytoplasm. It carries out the reaction L-aspartate + O2 = iminosuccinate + H2O2. Its pathway is cofactor biosynthesis; NAD(+) biosynthesis; iminoaspartate from L-aspartate (oxidase route): step 1/1. Catalyzes the oxidation of L-aspartate to iminoaspartate, the first step in the de novo biosynthesis of NAD(+). This Xylella fastidiosa (strain 9a5c) protein is L-aspartate oxidase (nadB).